The sequence spans 205 residues: Holliday junction branch migration complex subunit RuvA (205 aa).

Positions 1–64 (MIGKLRGLID…EDQIKLFGFR (64 aa)) are domain I. The segment at 65 to 143 (SDVEREWFRL…AFANVDPGVV (79 aa)) is domain II. Residues 144-154 (RLSGAIEESRA) form a flexible linker region. A domain III region spans residues 154–205 (APQPVADAISALINLGYGQPQAAAAIAAASRAAGDKAETAQLIRLGLKELAK).

It belongs to the RuvA family. As to quaternary structure, homotetramer. Forms an RuvA(8)-RuvB(12)-Holliday junction (HJ) complex. HJ DNA is sandwiched between 2 RuvA tetramers; dsDNA enters through RuvA and exits via RuvB. An RuvB hexamer assembles on each DNA strand where it exits the tetramer. Each RuvB hexamer is contacted by two RuvA subunits (via domain III) on 2 adjacent RuvB subunits; this complex drives branch migration. In the full resolvosome a probable DNA-RuvA(4)-RuvB(12)-RuvC(2) complex forms which resolves the HJ.

Its subcellular location is the cytoplasm. The RuvA-RuvB-RuvC complex processes Holliday junction (HJ) DNA during genetic recombination and DNA repair, while the RuvA-RuvB complex plays an important role in the rescue of blocked DNA replication forks via replication fork reversal (RFR). RuvA specifically binds to HJ cruciform DNA, conferring on it an open structure. The RuvB hexamer acts as an ATP-dependent pump, pulling dsDNA into and through the RuvAB complex. HJ branch migration allows RuvC to scan DNA until it finds its consensus sequence, where it cleaves and resolves the cruciform DNA. The polypeptide is Holliday junction branch migration complex subunit RuvA (Bradyrhizobium sp. (strain ORS 278)).